The following is a 99-amino-acid chain: Large ribosomal subunit protein eL30 (99 aa).

The protein belongs to the eukaryotic ribosomal protein eL30 family.

This is Large ribosomal subunit protein eL30 from Methanobrevibacter smithii (strain ATCC 35061 / DSM 861 / OCM 144 / PS).